Consider the following 441-residue polypeptide: Ribulose bisphosphate carboxylase large chain (441 aa).

Residues Asn89 and Thr139 each coordinate substrate. Lys141 functions as the Proton acceptor in the catalytic mechanism. Residue Lys143 coordinates substrate. Mg(2+)-binding residues include Lys167, Asp169, and Glu170. Lys167 is subject to N6-carboxylysine. Residue His260 is the Proton acceptor of the active site. Substrate contacts are provided by Arg261, His293, and Ser345.

It belongs to the RuBisCO large chain family. Type I subfamily. In terms of assembly, heterohexadecamer of 8 large chains and 8 small chains; disulfide-linked. The disulfide link is formed within the large subunit homodimers. Requires Mg(2+) as cofactor. Post-translationally, the disulfide bond which can form in the large chain dimeric partners within the hexadecamer appears to be associated with oxidative stress and protein turnover.

The protein localises to the plastid. It localises to the chloroplast. The enzyme catalyses 2 (2R)-3-phosphoglycerate + 2 H(+) = D-ribulose 1,5-bisphosphate + CO2 + H2O. The catalysed reaction is D-ribulose 1,5-bisphosphate + O2 = 2-phosphoglycolate + (2R)-3-phosphoglycerate + 2 H(+). Its function is as follows. RuBisCO catalyzes two reactions: the carboxylation of D-ribulose 1,5-bisphosphate, the primary event in carbon dioxide fixation, as well as the oxidative fragmentation of the pentose substrate in the photorespiration process. Both reactions occur simultaneously and in competition at the same active site. The protein is Ribulose bisphosphate carboxylase large chain of Coriandrum sativum (Coriander).